A 181-amino-acid polypeptide reads, in one-letter code: Ribosome maturation factor RimM (181 aa).

The PRC barrel domain occupies 98–177 (EGEFFYCDLI…KITTHNAKTL (80 aa)).

It belongs to the RimM family. In terms of assembly, binds ribosomal protein uS19.

The protein resides in the cytoplasm. Its function is as follows. An accessory protein needed during the final step in the assembly of 30S ribosomal subunit, possibly for assembly of the head region. Essential for efficient processing of 16S rRNA. May be needed both before and after RbfA during the maturation of 16S rRNA. It has affinity for free ribosomal 30S subunits but not for 70S ribosomes. This is Ribosome maturation factor RimM from Helicobacter pylori (strain J99 / ATCC 700824) (Campylobacter pylori J99).